We begin with the raw amino-acid sequence, 355 residues long: Methylthioribose-1-phosphate isomerase (355 aa).

Residues 50 to 52 (RGA), arginine 93, and glutamine 198 each bind substrate. The active-site Proton donor is the aspartate 239. Residue 249–250 (NK) coordinates substrate.

The protein belongs to the eIF-2B alpha/beta/delta subunits family. MtnA subfamily. In terms of assembly, homodimer.

It carries out the reaction 5-(methylsulfanyl)-alpha-D-ribose 1-phosphate = 5-(methylsulfanyl)-D-ribulose 1-phosphate. It participates in amino-acid biosynthesis; L-methionine biosynthesis via salvage pathway; L-methionine from S-methyl-5-thio-alpha-D-ribose 1-phosphate: step 1/6. Its function is as follows. Catalyzes the interconversion of methylthioribose-1-phosphate (MTR-1-P) into methylthioribulose-1-phosphate (MTRu-1-P). The sequence is that of Methylthioribose-1-phosphate isomerase from Geobacillus kaustophilus (strain HTA426).